We begin with the raw amino-acid sequence, 206 residues long: MEPVASNIQVLLQAAEFLERREREAEHGYASLCPHHSPGTVCRRRKAPLQAPGALNSGRHVHNELEKRRRAQLKRCLEQLRQQMPLGVDHTRYTTLSLLRGARMHIQKLEEQEQQAQRLKEKLRSRQQSLQQQLEQLQGLLGVRERDRLRADSLDSSGLSSERFDSDQEDLEVDVESLVFGTETELLQSFSAGQEHSYSHSTGTWL.

Residues 8–25 (IQVLLQAAEFLERREREA) are interaction with SIN3A and SIN3B. In terms of domain architecture, bHLH spans 57-109 (SGRHVHNELEKRRRAQLKRCLEQLRQQMPLGVDHTRYTTLSLLRGARMHIQKL).

Efficient DNA binding requires dimerization with another bHLH protein. Binds DNA as a heterodimer with MAX. Interacts with SIN3A AND SIN3B. Interacts with RNF17.

Its subcellular location is the nucleus. Transcriptional repressor. Binds with MAX to form a sequence-specific DNA-binding protein complex which recognizes the core sequence 5'-CAC[GA]TG-3'. Antagonizes MYC transcriptional activity by competing for MAX and suppresses MYC dependent cell transformation. This Rattus norvegicus (Rat) protein is Max dimerization protein 3 (Mxd3).